The following is a 308-amino-acid chain: Ribosomal RNA small subunit methyltransferase H (308 aa).

Residues 46 to 48 (AGH), aspartate 63, tyrosine 87, aspartate 108, and glutamine 115 each bind S-adenosyl-L-methionine. Residues 269-308 (TKRPVEASEEERGRNPRARSAKLRAAEKVAAPEGLPEVEV) are disordered. Residues 271 to 282 (RPVEASEEERGR) show a composition bias toward basic and acidic residues.

The protein belongs to the methyltransferase superfamily. RsmH family.

The protein localises to the cytoplasm. The catalysed reaction is cytidine(1402) in 16S rRNA + S-adenosyl-L-methionine = N(4)-methylcytidine(1402) in 16S rRNA + S-adenosyl-L-homocysteine + H(+). In terms of biological role, specifically methylates the N4 position of cytidine in position 1402 (C1402) of 16S rRNA. The protein is Ribosomal RNA small subunit methyltransferase H of Deinococcus geothermalis (strain DSM 11300 / CIP 105573 / AG-3a).